The chain runs to 254 residues: Imidazole glycerol phosphate synthase subunit HisF (254 aa).

Catalysis depends on residues D11 and D130.

The protein belongs to the HisA/HisF family. As to quaternary structure, heterodimer of HisH and HisF.

It is found in the cytoplasm. It catalyses the reaction 5-[(5-phospho-1-deoxy-D-ribulos-1-ylimino)methylamino]-1-(5-phospho-beta-D-ribosyl)imidazole-4-carboxamide + L-glutamine = D-erythro-1-(imidazol-4-yl)glycerol 3-phosphate + 5-amino-1-(5-phospho-beta-D-ribosyl)imidazole-4-carboxamide + L-glutamate + H(+). It participates in amino-acid biosynthesis; L-histidine biosynthesis; L-histidine from 5-phospho-alpha-D-ribose 1-diphosphate: step 5/9. In terms of biological role, IGPS catalyzes the conversion of PRFAR and glutamine to IGP, AICAR and glutamate. The HisF subunit catalyzes the cyclization activity that produces IGP and AICAR from PRFAR using the ammonia provided by the HisH subunit. The chain is Imidazole glycerol phosphate synthase subunit HisF from Gloeobacter violaceus (strain ATCC 29082 / PCC 7421).